A 113-amino-acid polypeptide reads, in one-letter code: Large ribosomal subunit protein bL17 (113 aa).

This sequence belongs to the bacterial ribosomal protein bL17 family. In terms of assembly, part of the 50S ribosomal subunit. Contacts protein L32.

The polypeptide is Large ribosomal subunit protein bL17 (Clostridium tetani (strain Massachusetts / E88)).